The sequence spans 366 residues: MQQIIISGSVAFLVSIFLTPILIRYFTNRQMGQEIREEGLQSHLRKRGTPTMGGIAIIAGITIGYLVTNIYSYFAGYGSFTASGLLVLGLMLGLGATGFADDFIKLYKERNLGLNKTAKLISQLAIALVFGLLVLRFPDENGLTPASTHLSFIRDIDTIDIAFGGGVLGTIVFLIFIYVVVSAWSNAVNITDGLDGLAAGATAFVMGAYTLIAFWQFRNSCDTAVEAGCYTVRDPLDIAVLAAGGLGATLGFLWWNAAPAKIFMGDTGSLALGGLVAGISVVSRTELLMVIIGALFVIEVASVAIQIAVFKTRGKRVFRMAPIHHHFEAVGWAETTVVVRFWLIAIMAVIAGMAVFYGDWLTLAEV.

Helical transmembrane passes span 3 to 23 (QIII…PILI), 55 to 75 (IAII…SYFA), 80 to 100 (FTAS…TGFA), 118 to 138 (AKLI…LRFP), 161 to 181 (IAFG…YVVV), 197 to 217 (LAAG…FWQF), 238 to 258 (IAVL…WNAA), 262 to 282 (IFMG…ISVV), 290 to 310 (VIIG…IAVF), and 341 to 361 (FWLI…GDWL).

This sequence belongs to the glycosyltransferase 4 family. MraY subfamily. Mg(2+) is required as a cofactor.

It localises to the cell membrane. It carries out the reaction UDP-N-acetyl-alpha-D-muramoyl-L-alanyl-gamma-D-glutamyl-meso-2,6-diaminopimeloyl-D-alanyl-D-alanine + di-trans,octa-cis-undecaprenyl phosphate = di-trans,octa-cis-undecaprenyl diphospho-N-acetyl-alpha-D-muramoyl-L-alanyl-D-glutamyl-meso-2,6-diaminopimeloyl-D-alanyl-D-alanine + UMP. It participates in cell wall biogenesis; peptidoglycan biosynthesis. Its function is as follows. Catalyzes the initial step of the lipid cycle reactions in the biosynthesis of the cell wall peptidoglycan: transfers peptidoglycan precursor phospho-MurNAc-pentapeptide from UDP-MurNAc-pentapeptide onto the lipid carrier undecaprenyl phosphate, yielding undecaprenyl-pyrophosphoryl-MurNAc-pentapeptide, known as lipid I. The sequence is that of Phospho-N-acetylmuramoyl-pentapeptide-transferase from Corynebacterium efficiens (strain DSM 44549 / YS-314 / AJ 12310 / JCM 11189 / NBRC 100395).